The following is a 310-amino-acid chain: Aspartate carbamoyltransferase catalytic subunit (310 aa).

Residues R55 and T56 each contribute to the carbamoyl phosphate site. K83 lines the L-aspartate pocket. 3 residues coordinate carbamoyl phosphate: R105, H136, and Q139. Residues R169 and R223 each contribute to the L-aspartate site. Residues G264 and P265 each contribute to the carbamoyl phosphate site.

This sequence belongs to the aspartate/ornithine carbamoyltransferase superfamily. ATCase family. As to quaternary structure, heterododecamer (2C3:3R2) of six catalytic PyrB chains organized as two trimers (C3), and six regulatory PyrI chains organized as three dimers (R2).

It catalyses the reaction carbamoyl phosphate + L-aspartate = N-carbamoyl-L-aspartate + phosphate + H(+). It participates in pyrimidine metabolism; UMP biosynthesis via de novo pathway; (S)-dihydroorotate from bicarbonate: step 2/3. In terms of biological role, catalyzes the condensation of carbamoyl phosphate and aspartate to form carbamoyl aspartate and inorganic phosphate, the committed step in the de novo pyrimidine nucleotide biosynthesis pathway. This is Aspartate carbamoyltransferase catalytic subunit from Saccharopolyspora erythraea (strain ATCC 11635 / DSM 40517 / JCM 4748 / NBRC 13426 / NCIMB 8594 / NRRL 2338).